Reading from the N-terminus, the 257-residue chain is MSILFYMIFLAYLRGIQGNSMDQRRLPEDSLNSLIIKLIQADILKNKLSKQMVDLQENYQSTLPKAEAPREPERGEPAKSEFQPVTAVGPEWLRHHRRYNSPRVLLSDSTPLEPPPLYLVEDYVGNPSVANRTARRKRYAEHKSHRGEYSVCDSESLWVTDKSSAIDIRGHQVTVLGEIKTGNSPVKQYFYETRCKEARPVKNGCRGIDDKHWNSQCKTSQTYFRALTSYNNKLVGWRWIRIDTSCVCALSRKIGRT.

Residues M1 to G18 form the signal peptide. Residues N19–R138 constitute a propeptide that is removed on maturation. The disordered stretch occupies residues S61 to E81. Positions E67 to K79 are enriched in basic and acidic residues. N-linked (GlcNAc...) asparagine glycosylation is present at N131. 3 disulfide bridges follow: C152/C217, C195/C246, and C205/C248.

This sequence belongs to the NGF-beta family.

It is found in the secreted. Functionally, seems to promote the survival of visceral and proprioceptive sensory neurons. This Sus scrofa (Pig) protein is Neurotrophin-3 (NTF3).